Reading from the N-terminus, the 367-residue chain is Cytochrome b (367 aa).

A run of 4 helical transmembrane segments spans residues 33-53 (FGSLLGICLALQILTGLFLAM), 77-98 (WVLRYMHANGASMFFICLYLHI), 113-133 (WNMGVILLFAVMATAFMGYVL), and 178-198 (FFAFHFLLPFIISALVMVHLL). Heme b-binding residues include His83 and His97. Residues His182 and His196 each contribute to the heme b site. His201 contributes to the a ubiquinone binding site. Transmembrane regions (helical) follow at residues 226–246 (IKDILGFFMMMLILLCLVLFS), 288–308 (LGGVLALVLSILILIIIPFLH), 320–340 (FSQCLFWLLVADLLTLTWIGG), and 347–367 (YIIIGQLASILYFMIIIVIMP).

The protein belongs to the cytochrome b family. As to quaternary structure, the cytochrome bc1 complex contains 11 subunits: 3 respiratory subunits (MT-CYB, CYC1 and UQCRFS1), 2 core proteins (UQCRC1 and UQCRC2) and 6 low-molecular weight proteins (UQCRH/QCR6, UQCRB/QCR7, UQCRQ/QCR8, UQCR10/QCR9, UQCR11/QCR10 and a cleavage product of UQCRFS1). This cytochrome bc1 complex then forms a dimer. It depends on heme b as a cofactor.

The protein localises to the mitochondrion inner membrane. Its function is as follows. Component of the ubiquinol-cytochrome c reductase complex (complex III or cytochrome b-c1 complex) that is part of the mitochondrial respiratory chain. The b-c1 complex mediates electron transfer from ubiquinol to cytochrome c. Contributes to the generation of a proton gradient across the mitochondrial membrane that is then used for ATP synthesis. The sequence is that of Cytochrome b (MT-CYB) from Hypsugo savii (Savi's pipistrelle).